Consider the following 762-residue polypeptide: 5-methyltetrahydropteroyltriglutamate--homocysteine methyltransferase (762 aa).

Residues Arg-18–Lys-21 and Lys-112 each bind 5-methyltetrahydropteroyltri-L-glutamate. L-homocysteine-binding positions include Ile-435 to Ser-437 and Glu-488. L-methionine-binding positions include Ile-435–Ser-437 and Glu-488. Residues Arg-519 to Cys-520 and Trp-565 each bind 5-methyltetrahydropteroyltri-L-glutamate. Asp-603 lines the L-homocysteine pocket. Asp-603 lines the L-methionine pocket. 5-methyltetrahydropteroyltri-L-glutamate is bound at residue Glu-609. His-645, Cys-647, and Glu-669 together coordinate Zn(2+). The Proton donor role is filled by His-698. Cys-730 contributes to the Zn(2+) binding site.

This sequence belongs to the vitamin-B12 independent methionine synthase family. The cofactor is Zn(2+).

It carries out the reaction 5-methyltetrahydropteroyltri-L-glutamate + L-homocysteine = tetrahydropteroyltri-L-glutamate + L-methionine. It functions in the pathway amino-acid biosynthesis; L-methionine biosynthesis via de novo pathway; L-methionine from L-homocysteine (MetE route): step 1/1. In terms of biological role, catalyzes the transfer of a methyl group from 5-methyltetrahydrofolate to homocysteine resulting in methionine formation. The protein is 5-methyltetrahydropteroyltriglutamate--homocysteine methyltransferase of Bacillus licheniformis (strain ATCC 14580 / DSM 13 / JCM 2505 / CCUG 7422 / NBRC 12200 / NCIMB 9375 / NCTC 10341 / NRRL NRS-1264 / Gibson 46).